The following is a 320-amino-acid chain: N-acetylneuraminate lyase (320 aa).

Aceneuramate contacts are provided by Thr-51 and Thr-52. Residue Tyr-143 is the Proton donor of the active site. Lys-173 (schiff-base intermediate with substrate) is an active-site residue. Positions 175, 199, 201, 202, and 218 each coordinate aceneuramate.

The protein belongs to the DapA family. NanA subfamily. As to quaternary structure, homotetramer.

Its subcellular location is the cytoplasm. It carries out the reaction aceneuramate = aldehydo-N-acetyl-D-mannosamine + pyruvate. The protein operates within amino-sugar metabolism; N-acetylneuraminate degradation. Functionally, catalyzes the cleavage of N-acetylneuraminic acid (sialic acid) to form pyruvate and N-acetylmannosamine via a Schiff base intermediate. It prevents sialic acids from being recycled and returning to the cell surface. Involved in the N-glycolylneuraminic acid (Neu5Gc) degradation pathway. The protein is N-acetylneuraminate lyase of Rattus norvegicus (Rat).